Consider the following 341-residue polypeptide: MIELNQIVKRYKTKKQDVLAVDHVDLSIQSGSIFGVVGFSGAGKSTLIRLLNHLEQPTSGDVIIDGDTIGKLSKSDLRKKRQKVSMIFQHFNLLWSRTVLNNITFPLEIAGISRQEAKQRALELVELVGLKGREDAYPSELSGGQKQRVGIARALANEPSVLLCDEATSALDPQTTDEILELLLKIKEERNLTIVIITHEMHVIRRICDEVAVMENGKVIEQGKVSSVFENPQHDVTKRFVKDDLNDDFDESISELVSLNENDYVVRLNFTGNNATEPLVSYITKTHNLDVNILEANIKHTKDGSIGFLIIQFAVANSEKFEKFKNDLEAQHVSVEVVKHG.

Residues 2-241 (IELNQIVKRY…PQHDVTKRFV (240 aa)) enclose the ABC transporter domain. 38 to 45 (GFSGAGKS) is an ATP binding site.

The protein belongs to the ABC transporter superfamily. Methionine importer (TC 3.A.1.24) family. The complex is composed of two ATP-binding proteins (MetN), two transmembrane proteins (MetI) and a solute-binding protein (MetQ).

The protein resides in the cell membrane. The catalysed reaction is L-methionine(out) + ATP + H2O = L-methionine(in) + ADP + phosphate + H(+). It carries out the reaction D-methionine(out) + ATP + H2O = D-methionine(in) + ADP + phosphate + H(+). Functionally, part of the ABC transporter complex MetNIQ involved in methionine import. Responsible for energy coupling to the transport system. This is Methionine import ATP-binding protein MetN from Staphylococcus saprophyticus subsp. saprophyticus (strain ATCC 15305 / DSM 20229 / NCIMB 8711 / NCTC 7292 / S-41).